A 291-amino-acid polypeptide reads, in one-letter code: Formamidopyrimidine-DNA glycosylase (291 aa).

Pro2 functions as the Schiff-base intermediate with DNA in the catalytic mechanism. Catalysis depends on Glu3, which acts as the Proton donor. The active-site Proton donor; for beta-elimination activity is the Lys58. DNA is bound by residues His100, Arg123, and Lys166. The segment at 257–291 adopts an FPG-type zinc-finger fold; it reads SVYGREGKECFQCGIPITRISQSGRSSFYCSQCQK. The Proton donor; for delta-elimination activity role is filled by Arg281.

It belongs to the FPG family. In terms of assembly, monomer. Zn(2+) is required as a cofactor.

It carries out the reaction Hydrolysis of DNA containing ring-opened 7-methylguanine residues, releasing 2,6-diamino-4-hydroxy-5-(N-methyl)formamidopyrimidine.. The catalysed reaction is 2'-deoxyribonucleotide-(2'-deoxyribose 5'-phosphate)-2'-deoxyribonucleotide-DNA = a 3'-end 2'-deoxyribonucleotide-(2,3-dehydro-2,3-deoxyribose 5'-phosphate)-DNA + a 5'-end 5'-phospho-2'-deoxyribonucleoside-DNA + H(+). In terms of biological role, involved in base excision repair of DNA damaged by oxidation or by mutagenic agents. Acts as a DNA glycosylase that recognizes and removes damaged bases. Has a preference for oxidized purines, such as 7,8-dihydro-8-oxoguanine (8-oxoG). Has AP (apurinic/apyrimidinic) lyase activity and introduces nicks in the DNA strand. Cleaves the DNA backbone by beta-delta elimination to generate a single-strand break at the site of the removed base with both 3'- and 5'-phosphates. This chain is Formamidopyrimidine-DNA glycosylase, found in Bartonella quintana (strain Toulouse) (Rochalimaea quintana).